Consider the following 300-residue polypeptide: Homoserine kinase (300 aa).

87–97 (PISRGLGSSSA) contributes to the ATP binding site.

This sequence belongs to the GHMP kinase family. Homoserine kinase subfamily.

The protein localises to the cytoplasm. It catalyses the reaction L-homoserine + ATP = O-phospho-L-homoserine + ADP + H(+). It functions in the pathway amino-acid biosynthesis; L-threonine biosynthesis; L-threonine from L-aspartate: step 4/5. Its function is as follows. Catalyzes the ATP-dependent phosphorylation of L-homoserine to L-homoserine phosphate. The protein is Homoserine kinase of Clostridium kluyveri (strain ATCC 8527 / DSM 555 / NBRC 12016 / NCIMB 10680 / K1).